The chain runs to 265 residues: MEMO1 family protein Mbar_A1422 (265 aa).

Belongs to the MEMO1 family.

The chain is MEMO1 family protein Mbar_A1422 from Methanosarcina barkeri (strain Fusaro / DSM 804).